The primary structure comprises 203 residues: Chaperonin-like RbcX protein 2, chloroplastic (203 aa).

The N-terminal 78 residues, 1–78, are a transit peptide targeting the chloroplast; sequence MVSAWFVVGS…RKSKKLLIVN (78 aa).

The protein belongs to the RbcX family. Homodimer. Interacts with rbcL, atpB and RBCS-1B.

The protein localises to the plastid. The protein resides in the chloroplast stroma. Chaperone involved in RuBisCO assembly process. This is Chaperonin-like RbcX protein 2, chloroplastic from Arabidopsis thaliana (Mouse-ear cress).